Here is a 513-residue protein sequence, read N- to C-terminus: Lysine--tRNA ligase (513 aa).

Glutamate 422 and glutamate 429 together coordinate Mg(2+).

Belongs to the class-II aminoacyl-tRNA synthetase family. In terms of assembly, homodimer. The cofactor is Mg(2+).

The protein resides in the cytoplasm. The enzyme catalyses tRNA(Lys) + L-lysine + ATP = L-lysyl-tRNA(Lys) + AMP + diphosphate. This is Lysine--tRNA ligase from Tolumonas auensis (strain DSM 9187 / NBRC 110442 / TA 4).